The sequence spans 298 residues: MAITAQMVKELRESTGAGMMDAKKALTETDGDMEAAVDWLRTKGLAKAAKKAGRTAAEGLVGVAVSGGTGVAVEVNSETDFVAKNADFQTMVTGFTQAALSVDDVEALKAADMGGKTVETTLQETIAVIGENMTLRRMAKISGDSVAAYVHNAAADGLGKIGVLVAVKGADNGIAKQIAMHIAATSPMALSEADLDPTLVERERAVQTQKALEENAASAKPKPDSVIENNIIPGRMKKFLEENTLLGQKFVINPDVTVAEAAKQAGVEILGFVRMAVGEGIEKEKEDFAAEVAKTLAG.

Residues 79–82 form an involved in Mg(2+) ion dislocation from EF-Tu region; sequence TDFV.

It belongs to the EF-Ts family.

Its subcellular location is the cytoplasm. In terms of biological role, associates with the EF-Tu.GDP complex and induces the exchange of GDP to GTP. It remains bound to the aminoacyl-tRNA.EF-Tu.GTP complex up to the GTP hydrolysis stage on the ribosome. This is Elongation factor Ts from Cereibacter sphaeroides (strain ATCC 17025 / ATH 2.4.3) (Rhodobacter sphaeroides).